Reading from the N-terminus, the 417-residue chain is MLSLEPLSRPVLDSSQTLLVIFLLAFTRQNSIFRYLSIPVLTFIVKEQITQPPAVVENFHQWLNESSVPFNYLHHINILALTSIDLRNDNNGVLPGLFDRIKSAFIYQLNPRGVGTRYQVKNIPPVPEYYKKRKGYLSQRYRFVVRQLCLFVWQYLIVDVGCSLWHNLPDQERFALFGPGTEWNIINAGPQQWKVRLMAAMIFWTTARNAVDLSHRLGSAVLTGIGATSVHEWPPMCGSLRDAYTLRNLWGKWWHQQLRWTLSSHSNFVTRRLLKLPRRSLLERYLNNAIVHVFSAFIHVNGWRLAGIPDGYIGPSLFYMSFVGGYLVEDFVQHIWATLFRSRSRTSTGIFFERLTGIFWVATFLTVTTPWWIYPLLRREHSFALPVSLVESVGMNNALAMIGVGAFILKTRFDANI.

The N-linked (GlcNAc...) asparagine glycan is linked to Asn64. The next 3 helical transmembrane spans lie at Ile308 to Val328, Gly357 to Leu377, and Leu389 to Leu409.

Belongs to the wax synthase family.

The protein localises to the membrane. The catalysed reaction is chrodrimanin A + acetyl-CoA = chrodrimanin B + CoA. The protein operates within secondary metabolite biosynthesis; terpenoid biosynthesis. In terms of biological role, acetyltransferase; part of the gene cluster that mediates the biosynthesis of chrodrimanin B, a meroterpenoid that acts as a potent blocker of insect GABA-gated chloride channels. The first step of the pathway is the biosynthesis of 6-hydroxymellein by the polyketide synthase cdmE. The prenyltransferase cdmH acts as a 6-hydroxymellein 5-farnesyltransferase and produces the hydrophobic metabolite verruculide C. The FAD-dependent monooxygenase cdmI further converts verruculide C into verruculide B. The terpene cyclase cdmG then produced the pentacyclic molecule 3-hydroxypentacecilide A, the backbone structure of chrodrimanin B, via folding the farnesyl moiety of the substrate into the chair-boat conformation. The short-chain dehydrogenase/reductase cdmF functions as the 3-OH dehydrogenase that oxidizes the C-3 hydroxyl group of 3-hydroxypentacecilide A and produces chrodrimanin C, the dehydrogenated product of 3-hydroxypentacecilide A. The cytochrome P450 monooxygenase cdmJ then accepts both 3-hydroxypentacecilide A and chrodrimanin C and functions as a C-7-beta-hydroxylase to produce respectively chrodrimanin H and chrodrimanin F. The dioxygenase cdmA accepts chrodrimanin H to afford chrodrimanin E, which is further transformed to chrodrimanin A by the dioxygenase cdmD. CdmA can also accept chrodrimanin C as substrate to convert it into verruculide A, which is further converted into chrodrimanin T by cdmD. The last step of the biosynthesis is proposed to be performed by the acetyltransferase cdmC which acetylates chrodrimanin A to yield chrodrimanin B. The pathway may also lead to the production of additional shunt products, including chrodrimanins T and U. This is Acetyltransferase cdmC from Talaromyces verruculosus (Penicillium verruculosum).